Reading from the N-terminus, the 901-residue chain is HTH-type transcriptional regulator MalT (901 aa).

39 to 46 is an ATP binding site; sequence SPAGYGKT. The HTH luxR-type domain maps to 829–894; it reads ELIRTSPLTQ…DAVQHAQQLL (66 aa). A DNA-binding region (H-T-H motif) is located at residues 853-872; it reads NEQIAGELEVAATTIKTHIR.

It belongs to the MalT family. As to quaternary structure, monomer in solution. Oligomerizes to an active state in the presence of the positive effectors ATP and maltotriose.

With respect to regulation, activated by ATP and maltotriose, which are both required for DNA binding. Its function is as follows. Positively regulates the transcription of the maltose regulon whose gene products are responsible for uptake and catabolism of malto-oligosaccharides. Specifically binds to the promoter region of its target genes, recognizing a short DNA motif called the MalT box. This Escherichia fergusonii (strain ATCC 35469 / DSM 13698 / CCUG 18766 / IAM 14443 / JCM 21226 / LMG 7866 / NBRC 102419 / NCTC 12128 / CDC 0568-73) protein is HTH-type transcriptional regulator MalT.